The chain runs to 285 residues: Protease HtpX homolog (285 aa).

The next 2 membrane-spanning stretches (helical) occupy residues 7–27 (TAMLMAAITALFIVIGGMIGG) and 30–50 (GMTIALVIALGMNFFSYWFSD). Histidine 131 provides a ligand contact to Zn(2+). The active site involves glutamate 132. Histidine 135 serves as a coordination point for Zn(2+). A run of 2 helical transmembrane segments spans residues 141-161 (ILISTISATMAGAISALANFA) and 177-197 (IAGIAVALLAPIAGALIQMAI). Glutamate 202 is a binding site for Zn(2+).

Belongs to the peptidase M48B family. It depends on Zn(2+) as a cofactor.

The protein resides in the cell inner membrane. The polypeptide is Protease HtpX homolog (Paraburkholderia phytofirmans (strain DSM 17436 / LMG 22146 / PsJN) (Burkholderia phytofirmans)).